A 365-amino-acid polypeptide reads, in one-letter code: 2-aminoethylphosphonate--pyruvate transaminase (365 aa).

At K194 the chain carries N6-(pyridoxal phosphate)lysine.

Belongs to the class-V pyridoxal-phosphate-dependent aminotransferase family. PhnW subfamily. As to quaternary structure, homodimer. Requires pyridoxal 5'-phosphate as cofactor.

It catalyses the reaction (2-aminoethyl)phosphonate + pyruvate = phosphonoacetaldehyde + L-alanine. Functionally, involved in phosphonate degradation. This chain is 2-aminoethylphosphonate--pyruvate transaminase, found in Bacillus mycoides (strain KBAB4) (Bacillus weihenstephanensis).